Here is a 184-residue protein sequence, read N- to C-terminus: MKNLTDSFVYLGHWPSAGSFGFNTDILATNPINLSVVFGVLIFFGKGVLNDLLDNRKQRILNTIRNSEELREGAIQQLENARARLRNVETEADKFRVNGYSEIEREKLNLINSTYKTLKQLENYKNETILFEQQRTINQVRERVFQQALQGAIGTLNSCLSNELHLRTINANIGMFGTMKEITD.

The helical transmembrane segment at 27-49 threads the bilayer; it reads LATNPINLSVVFGVLIFFGKGVL.

The protein belongs to the ATPase B chain family. As to quaternary structure, F-type ATPases have 2 components, F(1) - the catalytic core - and F(0) - the membrane proton channel. F(1) has five subunits: alpha(3), beta(3), gamma(1), delta(1), epsilon(1). F(0) has four main subunits: a(1), b(1), b'(1) and c(10-14). The alpha and beta chains form an alternating ring which encloses part of the gamma chain. F(1) is attached to F(0) by a central stalk formed by the gamma and epsilon chains, while a peripheral stalk is formed by the delta, b and b' chains.

The protein localises to the plastid. It is found in the chloroplast thylakoid membrane. Its function is as follows. F(1)F(0) ATP synthase produces ATP from ADP in the presence of a proton or sodium gradient. F-type ATPases consist of two structural domains, F(1) containing the extramembraneous catalytic core and F(0) containing the membrane proton channel, linked together by a central stalk and a peripheral stalk. During catalysis, ATP synthesis in the catalytic domain of F(1) is coupled via a rotary mechanism of the central stalk subunits to proton translocation. Component of the F(0) channel, it forms part of the peripheral stalk, linking F(1) to F(0). This chain is ATP synthase subunit b, chloroplastic, found in Arabidopsis thaliana (Mouse-ear cress).